The following is a 662-amino-acid chain: PsbB mRNA maturation factor Mbb1, chloroplastic (662 aa).

A chloroplast-targeting transit peptide spans 1–50 (MSLVPFSQLWRGVRTRGPVEQASSSSSSSSSSRRTWYAPARSQTGVQVAA). 2 disordered regions span residues 14–38 (RTRG…TWYA) and 75–101 (IIAD…RDEA). Residues 23–32 (SSSSSSSSSS) are compositionally biased toward low complexity. The span at 88 to 101 (EGERGDATGSRDEA) shows a compositional bias: basic and acidic residues. TPR repeat units follow at residues 126-160 (SRIR…DPAD), 161-194 (PRAY…TGNV), 196-229 (PYIW…DGTH), 231-263 (CAWH…CRRK), 269-302 (AYLY…AEGA), 305-338 (VALW…NPRS), 339-372 (RYVH…NPTD), 373-406 (PALY…DPSD), 408-440 (YMWQ…DPRS), and 444-477 (VYVF…DPKS). 2 disordered regions span residues 540–563 (SDGN…EAAA) and 598–662 (LPDF…RSMG).

Part of a 300 kDa complex that associates with RNA.

The protein localises to the plastid. The protein resides in the chloroplast stroma. Involved, directly or indirectly, in the processing of the chloroplast encoded psbB mRNA to its mature form, acting via the 5'-UTR of the psbB mRNA. This is PsbB mRNA maturation factor Mbb1, chloroplastic (MBB1) from Chlamydomonas reinhardtii (Chlamydomonas smithii).